A 741-amino-acid chain; its full sequence is Catalase-peroxidase 2 (741 aa).

The first 27 residues, 1–27 (MKINTLPTLSALTLAMSLALGAGMATA), serve as a signal peptide directing secretion. The tryptophyl-tyrosyl-methioninium (Trp-Tyr) (with M-255) cross-link spans 106-229 (WHSAGVYRIF…MGATQMGLIY (124 aa)). The Proton acceptor role is filled by H107. The segment at residues 229 to 255 (YVNPEGPNGVPDPLASAKEIRDTFGRM) is a cross-link (tryptophyl-tyrosyl-methioninium (Tyr-Met) (with W-106)). A heme b-binding site is contributed by H270.

Belongs to the peroxidase family. Peroxidase/catalase subfamily. In terms of assembly, homodimer or homotetramer. It depends on heme b as a cofactor. Formation of the three residue Trp-Tyr-Met cross-link is important for the catalase, but not the peroxidase activity of the enzyme.

It carries out the reaction H2O2 + AH2 = A + 2 H2O. The enzyme catalyses 2 H2O2 = O2 + 2 H2O. In terms of biological role, bifunctional enzyme with both catalase and broad-spectrum peroxidase activity. This Shewanella oneidensis (strain ATCC 700550 / JCM 31522 / CIP 106686 / LMG 19005 / NCIMB 14063 / MR-1) protein is Catalase-peroxidase 2.